The primary structure comprises 387 residues: EARP-interacting protein homolog (387 aa).

WD repeat units lie at residues 132–172 (TAHG…TKSV), 182–222 (KGQL…QIYC), 226–266 (AHGQ…EPVK), and 270–310 (EHSH…SEPF). The disordered stretch occupies residues 311–339 (GHLVDDEDLSDQEDNPQEEKTKEPLQDSI). The span at 315–326 (DDEDLSDQEDNP) shows a compositional bias: acidic residues. The stretch at 345 to 385 (EHEDSVYAVEWSSADPWLFASLSYDGRLVINRVPRALKYNI) is one WD 5 repeat.

This sequence belongs to the WD repeat EIPR1 family.

It localises to the golgi apparatus. It is found in the trans-Golgi network. Its function is as follows. May act as a component of endosomal retrieval machinery that is involved in protein transport from early endosomes to either recycling endosomes or the trans-Golgi network. This chain is EARP-interacting protein homolog, found in Xenopus laevis (African clawed frog).